Here is a 497-residue protein sequence, read N- to C-terminus: Probable malate:quinone oxidoreductase (497 aa).

This sequence belongs to the MQO family. Requires FAD as cofactor.

It catalyses the reaction (S)-malate + a quinone = a quinol + oxaloacetate. Its pathway is carbohydrate metabolism; tricarboxylic acid cycle; oxaloacetate from (S)-malate (quinone route): step 1/1. The polypeptide is Probable malate:quinone oxidoreductase (Flavobacterium johnsoniae (strain ATCC 17061 / DSM 2064 / JCM 8514 / BCRC 14874 / CCUG 350202 / NBRC 14942 / NCIMB 11054 / UW101) (Cytophaga johnsonae)).